We begin with the raw amino-acid sequence, 146 residues long: Pseudoazurin (146 aa).

An N-terminal signal peptide occupies residues 1–23 (MRNIAIKFAAAGILAMLAAPALA). Positions 28 to 116 (VHMLNKGAEG…MGMIALIAVG (89 aa)) constitute a Plastocyanin-like domain. Positions 63, 101, 104, and 109 each coordinate Cu cation.

Requires Cu cation as cofactor.

The protein localises to the periplasm. In terms of biological role, this soluble electron transfer copper protein is required for the inactivation of copper-containing nitrite reductase in the presence of oxygen. Serves as a direct electron donor to the nitrite reductase. This is Pseudoazurin from Alcaligenes faecalis.